The following is a 388-amino-acid chain: Succinate--CoA ligase [ADP-forming] subunit beta (388 aa).

An ATP-grasp domain is found at 9–244 (KQLFADYGLP…PSQEDPREAH (236 aa)). Residues Lys-46, 53–55 (GRG), Glu-99, Thr-102, and Glu-107 each bind ATP. Residues Asn-199 and Asp-213 each coordinate Mg(2+). Substrate contacts are provided by residues Asn-264 and 321–323 (GIV).

This sequence belongs to the succinate/malate CoA ligase beta subunit family. Heterotetramer of two alpha and two beta subunits. The cofactor is Mg(2+).

The enzyme catalyses succinate + ATP + CoA = succinyl-CoA + ADP + phosphate. It catalyses the reaction GTP + succinate + CoA = succinyl-CoA + GDP + phosphate. It functions in the pathway carbohydrate metabolism; tricarboxylic acid cycle; succinate from succinyl-CoA (ligase route): step 1/1. Its function is as follows. Succinyl-CoA synthetase functions in the citric acid cycle (TCA), coupling the hydrolysis of succinyl-CoA to the synthesis of either ATP or GTP and thus represents the only step of substrate-level phosphorylation in the TCA. The beta subunit provides nucleotide specificity of the enzyme and binds the substrate succinate, while the binding sites for coenzyme A and phosphate are found in the alpha subunit. This is Succinate--CoA ligase [ADP-forming] subunit beta from Hahella chejuensis (strain KCTC 2396).